A 294-amino-acid chain; its full sequence is MLENLSTEHRNEKTMNLDEMSIKEVLQSMNEEDRTVALAVEKEIEQIEKVVQTVIKSFEEEGRLIYIGAGTSGRLGILDAVECPPTFGTDDKMVQGFIAGGLKAFTKAVEGAEDREELAEEDLKSIGLNEKDTVIGIAASGRTPYVIGGLKYAQSVGASTASISCNKNAEISKYANLNVEVETGAEILTGSTRLKAGTAQKLVLNMISTASMIGVGKVYKNLMVDVQSTNEKLVERSKRIIVEATGASYEVAAEYYEKAERNVKAAIVMVLLQCEYGEALEKLKYAKGFVKKAL.

Residues 54–217 enclose the SIS domain; it reads VIKSFEEEGR…STASMIGVGK (164 aa). Glu82 (proton donor) is an active-site residue. Residue Glu113 is part of the active site.

It belongs to the GCKR-like family. MurNAc-6-P etherase subfamily. Homodimer.

The catalysed reaction is N-acetyl-D-muramate 6-phosphate + H2O = N-acetyl-D-glucosamine 6-phosphate + (R)-lactate. It participates in amino-sugar metabolism; N-acetylmuramate degradation. Its function is as follows. Specifically catalyzes the cleavage of the D-lactyl ether substituent of MurNAc 6-phosphate, producing GlcNAc 6-phosphate and D-lactate. This is N-acetylmuramic acid 6-phosphate etherase from Bacillus cereus (strain ATCC 14579 / DSM 31 / CCUG 7414 / JCM 2152 / NBRC 15305 / NCIMB 9373 / NCTC 2599 / NRRL B-3711).